A 1049-amino-acid chain; its full sequence is Bifunctional cytochrome P450/NADPH--P450 reductase (1049 aa).

The segment at 2–472 is cytochrome P450; sequence TIKEMPQPKT…STEQSAKKVR (471 aa). Tyr-52 provides a ligand contact to (9Z)-hexadecenoate. Residue Cys-401 participates in heme binding. The interval 473 to 1049 is NADPH--P450 reductase; sequence KKAENAHNTP…GRYAKDVWAG (577 aa). A Flavodoxin-like domain is found at 483–622; the sequence is LLVLYGSNMG…TYEEWREHMW (140 aa). Residues 489 to 494, 536 to 539, 570 to 572, and 578 to 580 contribute to the FMN site; these read SNMGTA, SYNG, CGD, and TYQ. An FAD-binding FR-type domain is found at 660 to 892; that stretch reads HGAFSTNVVA…STPQSEFTLP (233 aa).

The protein in the N-terminal section; belongs to the cytochrome P450 family. FAD serves as cofactor. The cofactor is FMN. Heme is required as a cofactor.

Its subcellular location is the cytoplasm. It carries out the reaction 2 oxidized [cytochrome P450] + NADPH = 2 reduced [cytochrome P450] + NADP(+) + H(+). It catalyses the reaction an organic molecule + reduced [NADPH--hemoprotein reductase] + O2 = an alcohol + oxidized [NADPH--hemoprotein reductase] + H2O + H(+). Its activity is regulated as follows. Inhibited by N-(12-imidazolyl-dodecanoyl)-L-leucine. In terms of biological role, functions as a fatty acid monooxygenase. Catalyzes hydroxylation of fatty acids at omega-1, omega-2 and omega-3 positions. Shows activity toward medium and long-chain fatty acids, with optimum chain lengths of 12, 14 and 16 carbons (lauric, myristic, and palmitic acids). Able to metabolize some of these primary metabolites to secondary and tertiary products. Marginal activity towards short chain lengths of 8-10 carbons. Hydroxylates highly branched fatty acids, which play an essential role in membrane fluidity regulation. Also displays a NADPH-dependent reductase activity in the C-terminal domain, which allows electron transfer from NADPH to the heme iron of the cytochrome P450 N-terminal domain. Involved in inactivation of quorum sensing signals of other competing bacteria by oxidazing efficiently acyl homoserine lactones (AHLs), molecules involved in quorum sensing signaling pathways, and their lactonolysis products acyl homoserines (AHs). This Priestia megaterium (strain ATCC 14581 / DSM 32 / CCUG 1817 / JCM 2506 / NBRC 15308 / NCIMB 9376 / NCTC 10342 / NRRL B-14308 / VKM B-512 / Ford 19) (Bacillus megaterium) protein is Bifunctional cytochrome P450/NADPH--P450 reductase.